A 167-amino-acid polypeptide reads, in one-letter code: Minor fimbrial protein PrsF (167 aa).

An N-terminal signal peptide occupies residues 1–18 (MIRLSLFISLLLTSVAVL).

The protein localises to the secreted. Its subcellular location is the fimbrium. Functionally, fimbriae (also called pili), polar filaments radiating from the surface of the bacterium to a length of 0.5-1.5 micrometers and numbering 100-300 per cell, enable bacteria to colonize the epithelium of specific host organs. This Escherichia coli protein is Minor fimbrial protein PrsF (prsF).